Here is a 190-residue protein sequence, read N- to C-terminus: Anthranilate synthase component 2 (190 aa).

In terms of domain architecture, Glutamine amidotransferase type-1 spans 1–190 (MILLIDNYDS…ILQNFINCLN (190 aa)). An L-glutamine-binding site is contributed by 52–54 (CPG). Cysteine 79 acts as the Nucleophile; for GATase activity in catalysis. L-glutamine contacts are provided by residues glutamine 83 and 129–130 (SL). Catalysis depends on residues histidine 169 and glutamate 171.

As to quaternary structure, tetramer of two components I and two components II.

The protein resides in the plastid. The protein localises to the cyanelle. It carries out the reaction chorismate + L-glutamine = anthranilate + pyruvate + L-glutamate + H(+). It functions in the pathway amino-acid biosynthesis; L-tryptophan biosynthesis; L-tryptophan from chorismate: step 1/5. This is Anthranilate synthase component 2 (trpG) from Cyanophora paradoxa.